We begin with the raw amino-acid sequence, 172 residues long: Shikimate kinase (172 aa).

12-17 (GSGKTS) contributes to the ATP binding site. Thr16 contributes to the Mg(2+) binding site. Residues Asp34, Arg58, and Gly81 each contribute to the substrate site. Arg122 provides a ligand contact to ATP. Arg139 lines the substrate pocket.

Belongs to the shikimate kinase family. As to quaternary structure, monomer. Mg(2+) is required as a cofactor.

The protein localises to the cytoplasm. It catalyses the reaction shikimate + ATP = 3-phosphoshikimate + ADP + H(+). Its pathway is metabolic intermediate biosynthesis; chorismate biosynthesis; chorismate from D-erythrose 4-phosphate and phosphoenolpyruvate: step 5/7. Catalyzes the specific phosphorylation of the 3-hydroxyl group of shikimic acid using ATP as a cosubstrate. This is Shikimate kinase from Dictyoglomus turgidum (strain DSM 6724 / Z-1310).